We begin with the raw amino-acid sequence, 1493 residues long: Protein RNA-directed DNA methylation 3 (1493 aa).

2 disordered regions span residues 1–34 and 54–96; these read MDRK…EGLR and GYYG…SSFV. Residues 21 to 28 carry the Nuclear localization signal motif; that stretch reads KRKNSVEF. Positions 24–34 are enriched in basic and acidic residues; the sequence is NSVEFRDEGLR. Positions 60–80 are enriched in acidic residues; the sequence is SDEDDDGLGFLNDMEDEPEVE. Residues 81–92 are compositionally biased toward basic and acidic residues; sequence ESSKAGKGEKGK. The 28-residue stretch at 239–266 folds into the KOW 1 domain; the sequence is KVSEGTWARVKNGKYKGDLAQIVAVSDT. Residues 393-432 form a disordered region; that stretch reads PTCREGGKGEGSGGGKGEGSGGGKGEGSRGGKGEGSSDFK. The segment covering 401-417 has biased composition (gly residues); it reads GEGSGGGKGEGSGGGKG. Residues 418 to 432 show a composition bias toward basic and acidic residues; the sequence is EGSRGGKGEGSSDFK. One can recognise a KOW 2 domain in the interval 501–528; that stretch reads QISVNDVVKISKGPSEGKQGVVRQVYRG. A disordered region spans residues 578–602; sequence SSPKSPLSPEKEWQPRERYNSSNQG. Residues 586–596 are compositionally biased toward basic and acidic residues; it reads PEKEWQPRERY. In terms of domain architecture, KOW 3 spans 607–634; that stretch reads TYSIGQKLRIRVGPLKGYLCRVIALRYS. Disordered stretches follow at residues 692–711, 728–747, and 757–1493; these read IGAG…PSTD, EKNP…TVAD, and AAEN…KTGW. Copy 1 of the repeat occupies 732-741; that stretch reads WGGSKPTSDV. Residues 732 to 1493 form a 42 X 9 AA approximate WG/GW-rich tandem repeats region; sequence WGGSKPTSDV…WGTGDKKTGW (762 aa). Positions 757–767 are enriched in low complexity; that stretch reads AAENKPASASD. 37 consecutive repeat copies span residues 775-784, 789-797, 818-827, 836-845, 854-863, 866-875, 883-892, 917-926, 935-943, 944-953, 954-962, 963-972, 978-987, 1003-1012, 1013-1022, 1023-1032, 1033-1042, 1043-1052, 1053-1062, 1063-1072, 1073-1082, 1132-1141, 1144-1153, 1156-1165, 1167-1176, 1180-1189, 1192-1201, 1204-1213, 1217-1226, 1229-1238, 1241-1250, 1253-1262, 1266-1275, 1278-1287, 1290-1299, 1302-1311, and 1314-1323. Residues 790–812 show a composition bias toward polar residues; the sequence is GDTSASNVEASSWEKQGASTSNV. Residues 846–860 show a composition bias toward basic and acidic residues; it reads SQKKEESSWGKKGGS. Residues 866 to 875 show a composition bias toward polar residues; that stretch reads WGNKDGNSSA. The segment covering 955–1090 has biased composition (basic and acidic residues); the sequence is GKKDDGGSWG…YSEQTFDRGG (136 aa). The segment covering 1122-1134 has biased composition (low complexity); that stretch reads PWSKPSGGSSWGK. The segment covering 1156-1172 has biased composition (polar residues); it reads WGKQDNGVGSSWGKQND. Residues 1186 to 1213 are compositionally biased toward gly residues; that stretch reads AGGGSSWGKQDSGGDGSSWGKQDGGGDS. Polar residues predominate over residues 1218-1231; that stretch reads GKQNNTSGGSSWGK. A compositionally biased stretch (gly residues) spans 1235-1264; that stretch reads AGGGSSWGKQDGGGGGSSWGKQDGGGGSGS. Polar residues predominate over residues 1270-1283; sequence NETSNGSSWGKQND. Positions 1284 to 1321 are enriched in gly residues; the sequence is SGGGSSWGKQDGGGGGSSWGKQNDGGGGSSWGKQGDGG. 2 stretches are compositionally biased toward polar residues: residues 1366 to 1382 and 1392 to 1401; these read WKTD…QSGG and DSNNSKPSGS. The stretch at 1389–1398 is repeat 39; the sequence is WGEDSNNSKP. Positions 1416–1430 are enriched in basic and acidic residues; it reads NSKKETNDKPGDDSK. Positions 1432 to 1442 are enriched in polar residues; sequence AWGTSNDQVNT. 3 repeat units span residues 1433-1442, 1467-1475, and 1484-1493.

Interacts with AGO4 via its C-terminal region and with RNA transcripts. Binds chromatin at loci subject to transcriptional silencing downstream of RNA Polymerase V, but independently from the presence of 24-nt siRNA.

The protein resides in the nucleus. Its subcellular location is the nucleoplasm. Functionally, effector of RNA-directed DNA methylation (RdDM) triggered by small interfering RNAs (siRNAs, 24-nt RNAs). Functions as an adapter protein that binds scaffold transcripts generated by polymerase V and recruits AGO4 and AGO4-bound siRNAs to form an RdDM effector complex. Promotes the expression of 24-nt RNAs. Required for the initial establishment of DNA methylation. Together with AGO4, required for transcriptional gene silencing (TGS) by DNA methylation and repressive histone modifications (H3K9me2) of several chromatin loci. The chain is Protein RNA-directed DNA methylation 3 from Arabidopsis thaliana (Mouse-ear cress).